The primary structure comprises 354 residues: Rhodopsin (354 aa).

Residues Met-1–Ala-36 are Extracellular-facing. N-linked (GlcNAc...) asparagine glycans are attached at residues Asn-2 and Asn-15. A helical transmembrane segment spans residues Tyr-37–Val-61. Topologically, residues Thr-62–Asn-73 are cytoplasmic. The chain crosses the membrane as a helical span at residues Tyr-74–Tyr-96. Over Thr-97 to Cys-110 the chain is Extracellular. A disulfide bridge links Cys-110 with Cys-187. A helical transmembrane segment spans residues Asn-111–Ile-133. Residues Glu-134–Trp-136 carry the 'Ionic lock' involved in activated form stabilization motif. The Cytoplasmic portion of the chain corresponds to Glu-134–His-152. The helical transmembrane segment at Ala-153–Phe-173 threads the bilayer. Residues Gly-174 to Ser-202 lie on the Extracellular side of the membrane. Residue Asn-200 is glycosylated (N-linked (GlcNAc...) asparagine). The helical transmembrane segment at Phe-203–Gly-224 threads the bilayer. Residues Arg-225–Arg-252 are Cytoplasmic-facing. Residues Met-253–Tyr-274 form a helical membrane-spanning segment. The Extracellular segment spans residues Ile-275–Leu-286. The chain crosses the membrane as a helical span at residues Phe-287–Cys-308. The residue at position 296 (Lys-296) is an N6-(retinylidene)lysine. Residues Met-309–Ala-354 lie on the Cytoplasmic side of the membrane. Residues Cys-322 and Cys-323 are each lipidated (S-palmitoyl cysteine). Positions Glu-329–Ala-354 are disordered. Low complexity predominate over residues Ala-334 to Ala-354.

Belongs to the G-protein coupled receptor 1 family. Opsin subfamily. In terms of processing, phosphorylated on some or all of the serine and threonine residues present in the C-terminal region. Contains one covalently linked retinal chromophore.

Its subcellular location is the membrane. It is found in the cell projection. The protein resides in the cilium. The protein localises to the photoreceptor outer segment. In terms of biological role, photoreceptor required for image-forming vision at low light intensity. While most salt water fish species use retinal as chromophore, most freshwater fish use 3-dehydroretinal, or a mixture of retinal and 3-dehydroretinal. Light-induced isomerization of 11-cis to all-trans retinal triggers a conformational change that activates signaling via G-proteins. Subsequent receptor phosphorylation mediates displacement of the bound G-protein alpha subunit by arrestin and terminates signaling. The protein is Rhodopsin (rho) of Atherina boyeri (Big-scale sand smelt).